Here is a 399-residue protein sequence, read N- to C-terminus: Elongation factor Tu (399 aa).

The 195-residue stretch at 10 to 204 folds into the tr-type G domain; it reads KPHVNIGTIG…AVDANIPEPV (195 aa). A G1 region spans residues 19–26; sequence GHVDHGKT. Residue 19-26 participates in GTP binding; the sequence is GHVDHGKT. T26 is a binding site for Mg(2+). Residues 60-64 form a G2 region; it reads GITIN. The G3 stretch occupies residues 81 to 84; sequence DCPG. Residues 81–85 and 136–139 each bind GTP; these read DCPGH and NKCD. The segment at 136 to 139 is G4; sequence NKCD. A G5 region spans residues 174–176; the sequence is SGL.

Belongs to the TRAFAC class translation factor GTPase superfamily. Classic translation factor GTPase family. EF-Tu/EF-1A subfamily. In terms of assembly, monomer.

It is found in the cytoplasm. The catalysed reaction is GTP + H2O = GDP + phosphate + H(+). Functionally, GTP hydrolase that promotes the GTP-dependent binding of aminoacyl-tRNA to the A-site of ribosomes during protein biosynthesis. In Synechococcus sp. (strain RCC307), this protein is Elongation factor Tu.